The chain runs to 617 residues: MKAGTYKVKAKGHGSSFMPMEVTLSDDAIQRIQVDASGETSGIADEVFKRLPAKIVKGQTLNVDTVAGATISSRGVVGGVAEAITLAGGDADEWKQRAKPEIATQAAQVEEYQTDVVVVGAGGAGLAAATRSLQHDKQVVILEKFPQLGGNTTRAGGPMNAADPDWQRDFAALTGEKETLKRLANTPLEQIDPEYRADFERLREQIKEYIASGAQYLFDSNLLHEIQTYLGGKREDLAGHEIHGRYQLVKTLVDNALDSVKWLADLGVKFDQTDVTMPVGALWRRGHKPVEPMGYAFIHVLGDWVTEHGATILTETRAEHLLMENGRVVGVVAHKTDGTKVTVRAKSTFLTAGGFGANTPMVQKYNTYWEHIDDDIATTNSPAITGDGISLGQEAGAELTGMGFIQLMPVSDPVTGELFTGLQTPPGNFIMVNQEGKRFVNEFAERDTLAAAAIAQGGLFYLIADDKIKETAYNTTQESIDAQVEAGTLFKADTLAELAGKVGMDPATLEDTINKYNSYVDAGHDPEFGKSASHLKCEVAPFYATPRKPAIHHTMGGLAIDKHGHVLDKAERVIAGLYSAGENAGGLHAGNRLGGNSLADIFTFGRLAADTAAQENG.

Position 70 is an FMN phosphoryl threonine (threonine 70). Residues alanine 124, glutamate 143, asparagine 151, threonine 152, glycine 156, glycine 157, and aspartate 387 each contribute to the FAD site. Arginine 446 functions as the Proton donor in the catalytic mechanism. Residues histidine 553, glutamate 582, and leucine 598 each coordinate FAD.

This sequence belongs to the FAD-dependent oxidoreductase 2 family. FRD/SDH subfamily. The cofactor is FAD. It depends on FMN as a cofactor.

It carries out the reaction dihydrourocanate + A = urocanate + AH2. Functionally, catalyzes the two-electron reduction of urocanate to dihydrourocanate (also named imidazole propionate or deamino-histidine). Dihydrourocanate is present at higher concentrations in subjects with type 2 diabetes, and directly impairs glucose tolerance and insulin signaling at the level of insulin receptor substrate (IRS) through activation of p38 gamma (MAPK12)-p62-mTORC1. Therefore, the UrdA enzyme from the gut bacteria L.fermentum strain NBRC 3956 may contribute to the pathogenesis of type 2 diabetes by producing the microbial metabolite dihydrourocanate. This is Urocanate reductase from Limosilactobacillus fermentum (strain NBRC 3956 / LMG 18251) (Lactobacillus fermentum).